The primary structure comprises 59 residues: Large ribosomal subunit protein uL30 (59 aa).

This sequence belongs to the universal ribosomal protein uL30 family. In terms of assembly, part of the 50S ribosomal subunit.

In Buchnera aphidicola subsp. Acyrthosiphon pisum (strain 5A), this protein is Large ribosomal subunit protein uL30.